The sequence spans 66 residues: Toxin Boma6e (66 aa).

The 63-residue stretch at 2 to 64 folds into the LCN-type CS-alpha/beta domain; that stretch reads RDAYIAQNYN…VPLKVQGKCH (63 aa). 3 disulfides stabilise this stretch: C12/C63, C22/C46, and C26/C48.

It belongs to the long (3 C-C) scorpion toxin superfamily. Only three disulfide bridges can be formed, because only seven cysteines are present. Expressed by the venom gland.

The protein localises to the secreted. Binds voltage-independently at site-3 of sodium channels (Nav) and inhibits the inactivation of the activated channels, thereby blocking neuronal transmission. The polypeptide is Toxin Boma6e (Buthus occitanus mardochei (Moroccan scorpion)).